Here is a 228-residue protein sequence, read N- to C-terminus: Endonuclease V (228 aa).

Mg(2+) is bound by residues Asp-43 and Asp-109.

It belongs to the endonuclease V family. Requires Mg(2+) as cofactor.

Its subcellular location is the cytoplasm. The enzyme catalyses Endonucleolytic cleavage at apurinic or apyrimidinic sites to products with a 5'-phosphate.. DNA repair enzyme involved in the repair of deaminated bases. Selectively cleaves double-stranded DNA at the second phosphodiester bond 3' to a deoxyinosine leaving behind the intact lesion on the nicked DNA. The polypeptide is Endonuclease V (Dictyoglomus thermophilum (strain ATCC 35947 / DSM 3960 / H-6-12)).